Reading from the N-terminus, the 249-residue chain is Undecaprenyl-diphosphatase (249 aa).

Helical transmembrane passes span 11–31 (GLTE…TAIF), 35–55 (PDVG…LIFV), 80–100 (LVLS…FIES), 101–121 (VFSS…LMLL), 135–155 (IPYF…LPGI), 180–200 (FLMS…NVAF), 202–222 (TEQI…LYLV), and 226–246 (VIGG…FFVL).

It belongs to the UppP family.

It is found in the cell membrane. The enzyme catalyses di-trans,octa-cis-undecaprenyl diphosphate + H2O = di-trans,octa-cis-undecaprenyl phosphate + phosphate + H(+). Catalyzes the dephosphorylation of undecaprenyl diphosphate (UPP). The polypeptide is Undecaprenyl-diphosphatase (Methanococcus maripaludis (strain C7 / ATCC BAA-1331)).